The following is a 164-amino-acid chain: Glycine cleavage system H protein, mitochondrial (164 aa).

Residues 1–34 (MALRLWASSAANALKISCSGATRAAPAYSISRYF) constitute a mitochondrion transit peptide. The Lipoyl-binding domain occupies 56–138 (VATIGITDHA…YEDGWMIKVK (83 aa)). Lys-97 bears the N6-lipoyllysine mark.

This sequence belongs to the GcvH family. The glycine cleavage system is composed of four proteins: P, T, L and H. (R)-lipoate serves as cofactor.

The protein localises to the mitochondrion. Functionally, the glycine cleavage system catalyzes the degradation of glycine. The H protein shuttles the methylamine group of glycine from the P protein to the T protein. The sequence is that of Glycine cleavage system H protein, mitochondrial (GDCSH) from Oryza sativa subsp. indica (Rice).